Here is a 394-residue protein sequence, read N- to C-terminus: MTREVVVVSGVRTAIGTFGGSLKDVAPAELGALVVREALARAQVSGDDVGHVVFGNVIQTEPRDMYLGRVAAVNGGVTINAPALTVNRLCGSGLQAIVSAAQTILLGDTDVAIGGGAESMSRAPYLAPAARWGARMGDAGLVDMMLGALHDPFHRIHMGVTAENVAKEYDISRAQQDEAALESHRRASAAIKAGYFKDQIVPVVSKGRKGDVTFDTDEHVRHDATIDDMTKLRPVFVKENGTVTAGNASGLNDAAAAVVMMERAEAERRGLKPLARLVSYGHAGVDPKAMGIGPVPATKIALERAGLQVSDLDVIEANEAFAAQACAVTKALGLDPAKVNPNGSGISLGHPIGATGALITVKALHELNRVQGRYALVTMCIGGGQGIAAIFERI.

The active-site Acyl-thioester intermediate is the cysteine 90. Catalysis depends on proton acceptor residues histidine 350 and cysteine 380.

It belongs to the thiolase-like superfamily. Thiolase family.

The enzyme catalyses an acyl-CoA + acetyl-CoA = a 3-oxoacyl-CoA + CoA. It carries out the reaction 2 acetyl-CoA = acetoacetyl-CoA + CoA. Its function is as follows. Required for efficient production of poly(beta-hydroxybutyrate-co-beta-hydroxyvalerate) (PHBV). Catalyzes the condensation of acetyl-CoA and propionyl-CoA to form beta-ketovaleryl-CoA, and the condensation of two acetyl-CoA molecules to form acetoacetyl-CoA. This chain is Beta-ketothiolase BktB (bktB), found in Cupriavidus necator (strain ATCC 17699 / DSM 428 / KCTC 22496 / NCIMB 10442 / H16 / Stanier 337) (Ralstonia eutropha).